The following is a 308-amino-acid chain: 2-methylisocitrate lyase (308 aa).

54–56 (SGG) is a binding site for substrate. Positions 94 and 96 each coordinate Mg(2+). Substrate is bound by residues 131-132 (CG), Arg166, Glu196, 224-226 (NIT), Arg255, and Arg284.

The protein belongs to the isocitrate lyase/PEP mutase superfamily. Methylisocitrate lyase family. In terms of assembly, homotetramer; dimer of dimers. It depends on Mg(2+) as a cofactor.

It catalyses the reaction (2S,3R)-3-hydroxybutane-1,2,3-tricarboxylate = pyruvate + succinate. The protein operates within organic acid metabolism; propanoate degradation. Its function is as follows. Involved in the catabolism of short chain fatty acids (SCFA) via the 2-methylcitrate cycle I (propionate degradation route). Catalyzes the thermodynamically favored C-C bond cleavage reaction of (2R,3S)-2-methylisocitrate to yield pyruvate and succinate via an alpha-carboxy-carbanion intermediate. The sequence is that of 2-methylisocitrate lyase from Vibrio cholerae serotype O1 (strain ATCC 39315 / El Tor Inaba N16961).